Consider the following 360-residue polypeptide: Protein pelota homolog (360 aa).

This sequence belongs to the eukaryotic release factor 1 family. Pelota subfamily. Monomer. A divalent metal cation serves as cofactor.

It is found in the cytoplasm. Functionally, may function in recognizing stalled ribosomes, interact with stem-loop structures in stalled mRNA molecules, and effect endonucleolytic cleavage of the mRNA. May play a role in the release non-functional ribosomes and degradation of damaged mRNAs. Has endoribonuclease activity. The polypeptide is Protein pelota homolog (Hyperthermus butylicus (strain DSM 5456 / JCM 9403 / PLM1-5)).